The sequence spans 422 residues: UDP-N-acetylglucosamine 1-carboxyvinyltransferase (422 aa).

22–23 (KN) provides a ligand contact to phosphoenolpyruvate. Arg-94 contributes to the UDP-N-acetyl-alpha-D-glucosamine binding site. The active-site Proton donor is the Cys-118. 2-(S-cysteinyl)pyruvic acid O-phosphothioketal is present on Cys-118. Residues 123 to 127 (RPVDL), Asp-309, and Ile-331 each bind UDP-N-acetyl-alpha-D-glucosamine.

The protein belongs to the EPSP synthase family. MurA subfamily.

The protein resides in the cytoplasm. It carries out the reaction phosphoenolpyruvate + UDP-N-acetyl-alpha-D-glucosamine = UDP-N-acetyl-3-O-(1-carboxyvinyl)-alpha-D-glucosamine + phosphate. It participates in cell wall biogenesis; peptidoglycan biosynthesis. Cell wall formation. Adds enolpyruvyl to UDP-N-acetylglucosamine. The polypeptide is UDP-N-acetylglucosamine 1-carboxyvinyltransferase (Cereibacter sphaeroides (strain KD131 / KCTC 12085) (Rhodobacter sphaeroides)).